The following is a 359-amino-acid chain: MRKIVHVDMDAFYASVEQRDDPSLRGKPVVVAWRGARSVVCAASYEARIFGIRSAMPAVRAERLCPDAIFVPPDFTRYKAVSRQVREIFHRHTDLVEPLSLDEAYLDVTHAKTGMQLATEVAQLIRTQIREETQLTASAGIAPNKFLAKIASDWRKPDGQFVIAPSRVDAFLLPLKVNRIPGVGKVMDGKLAALGIVTVADLRQRPLEELQAHFGSFGQSLYRRARGIDERPVEPDQEVQSVSSEDTFSEDLALDALAPHILRLAEKTWLATRRTERIGRTVVLKLKTSNFRILTRSYTPEQPPTSQEALAQIALALTRRVELPAQTRYRLVGVGLGGFSDVENGAVQGQLFGQMPPLE.

Residues 4-184 enclose the UmuC domain; it reads IVHVDMDAFY…LKVNRIPGVG (181 aa). Residues aspartate 8 and aspartate 102 each coordinate Mg(2+). Residue glutamate 103 is part of the active site.

Belongs to the DNA polymerase type-Y family. As to quaternary structure, monomer. Mg(2+) serves as cofactor.

It localises to the cytoplasm. It carries out the reaction DNA(n) + a 2'-deoxyribonucleoside 5'-triphosphate = DNA(n+1) + diphosphate. Its function is as follows. Poorly processive, error-prone DNA polymerase involved in untargeted mutagenesis. Copies undamaged DNA at stalled replication forks, which arise in vivo from mismatched or misaligned primer ends. These misaligned primers can be extended by PolIV. Exhibits no 3'-5' exonuclease (proofreading) activity. May be involved in translesional synthesis, in conjunction with the beta clamp from PolIII. The protein is DNA polymerase IV of Xanthomonas axonopodis pv. citri (strain 306).